We begin with the raw amino-acid sequence, 291 residues long: Verruculogen synthase (291 aa).

Belongs to the PhyH family. In terms of assembly, homodimer. Fe cation serves as cofactor.

It catalyses the reaction fumitremorgin B + 2-oxoglutarate + AH2 + 2 O2 = verruculogen + succinate + A + CO2 + H2O. Its pathway is mycotoxin biosynthesis. Its function is as follows. Verruculogen synthase; part of the gene cluster that mediates the biosynthesis of fumitremorgins, indole alkaloids that carry not only intriguing chemical structures, but also interesting biological and pharmacological activities. The biosynthesis of fumitremorgin-type alkaloids begins by condensation of the two amino acids L-tryptophan and L-proline to brevianamide F, catalyzed by the non-ribosomal peptide synthetase ftmPS/ftmA. Brevianamide F is then prenylated by the prenyltransferase ftmPT1/ftmB in the presence of dimethylallyl diphosphate, resulting in the formation of tryprostatin B. The three cytochrome P450 monooxygenases, ftmP450-1/ftmC, ftmP450-2/ftmE and ftmP450-3/FtmG, are responsible for the conversion of tryprostatin B to 6-hydroxytryprostatin B, tryprostatin A to fumitremorgin C and fumitremorgin C to 12,13-dihydroxyfumitremorgin C, respectively. The putative methyltransferase ftmMT/ftmD is expected for the conversion of 6-hydroxytryprostatin B to tryprostatin A. FtmPT2/FtmH catalyzes the prenylation of 12,13-dihydroxyfumitre-morgin C in the presence of dimethylallyl diphosphate, resulting in the formation of fumitremorgin B. Fumitremorgin B is further converted to verruculogen by ftmOx1/ftmF via the insertion of an endoperoxide bond between the two prenyl moieties. Finally, verruculogen is further converted to fumitremorgin A by the verruculogen prenyltransferase ftmPT3. The sequence is that of Verruculogen synthase from Neosartorya fischeri (strain ATCC 1020 / DSM 3700 / CBS 544.65 / FGSC A1164 / JCM 1740 / NRRL 181 / WB 181) (Aspergillus fischerianus).